Reading from the N-terminus, the 134-residue chain is MIYMLDTNICVYAINKHPDSYYNNLELLAKNNTIAISSIVLAELQYGVSKSKKKEQNQSKLDIFLSRLEIIDFSAKCTFYYGELRTELEQKGLIIGNNDLLIASHAIAENATLVTNNIKEFKRIPNLILENWDK.

The 122-residue stretch at 3-124 (YMLDTNICVY…TNNIKEFKRI (122 aa)) folds into the PINc domain. Asp-6 contributes to the Mg(2+) binding site.

Belongs to the PINc/VapC protein family. In terms of assembly, forms complexes with VapB2; probably VapC2(4):VapB2(2) in the absence of DNA, and VapC2(4):VapB2(4) in the presence of DNA. Crystallizes as heterodimers with stoichiometry VapC2(4):VapB2(4) in the presence of its probable promoter DNA. The heterodimers are in contact via alternative VapC-VapC and VapB-VapB interactions. This subunit does not contact DNA. Mg(2+) serves as cofactor.

In terms of biological role, toxic component of a type II toxin-antitoxin (TA) system. Has ssRNase activity. Upon expression in E.coli or S.cerevisiae inhibits growth in liquid culture; in S.cerevisiae its expression leads to apoptosis-like characteristics. Rapidly induces apoptosis (within 2 hours) upon microinjection into mouse fibroblasts (L929 line); pretreatment of cells with dexamethasone protects them. Probably contributes to host cell death if bacterial cell lysis occurs during host infection. Its toxic effect is neutralized by coexpression with cognate antitoxin VapB2, its RNase activity is partially inhibited in vitro by VapB2. This is Ribonuclease VapC2 from Rickettsia felis (strain ATCC VR-1525 / URRWXCal2) (Rickettsia azadi).